We begin with the raw amino-acid sequence, 259 residues long: 2,3-dihydroxy-2,3-dihydro-p-cumate dehydrogenase (259 aa).

Position 18–42 (18–42 (VTGGAHGIGLGIVERLLGLGARVTA)) interacts with NAD(+). Y163 functions as the Proton acceptor in the catalytic mechanism.

It belongs to the short-chain dehydrogenases/reductases (SDR) family.

The catalysed reaction is (2R,3S)-2,3-dihydroxy-2,3-dihydro-p-cumate + NAD(+) = 2,3-dihydroxy-p-cumate + NADH + H(+). It functions in the pathway aromatic compound metabolism; p-cumate degradation; acetaldehyde and pyruvate from p-cumate: step 2/7. This Pseudomonas putida (strain ATCC 700007 / DSM 6899 / JCM 31910 / BCRC 17059 / LMG 24140 / F1) protein is 2,3-dihydroxy-2,3-dihydro-p-cumate dehydrogenase (cmtB).